A 407-amino-acid chain; its full sequence is Protein NIS1 (407 aa).

Positions 41–61 (SNSNSNSNTNSNTNSNTNSNS) are enriched in low complexity. Residues 41–64 (SNSNSNSNTNSNTNSNTNSNSDTK) are disordered. Residues S260, S264, S300, and S302 each carry the phosphoserine modification. Residues 277-302 (IKQNSTTPTTRSVYNKNVGRSNTSPS) are compositionally biased toward polar residues. The interval 277–315 (IKQNSTTPTTRSVYNKNVGRSNTSPSVLYHPKRRGKLNT) is disordered. Basic residues predominate over residues 306 to 315 (HPKRRGKLNT). The SUMO-binding signature appears at 391-398 (IIIPDSQD).

Interacts with CBF2, GIS1, NAP1, PRM8, REI1, SHS1 and SMT3.

Its subcellular location is the bud neck. It localises to the cytoplasm. The protein localises to the cell cortex. In terms of biological role, may be involved in a mitotic signaling network. Binds sumoylated proteins and may stabilize SUMO chains. This Saccharomyces cerevisiae (strain ATCC 204508 / S288c) (Baker's yeast) protein is Protein NIS1 (NIS1).